A 379-amino-acid chain; its full sequence is Armadillo repeat-containing X-linked protein 3 (379 aa).

At 1–6 (MGYARK) the chain is on the mitochondrial intermembrane side. Mitochondrion outer membrane (MOM)-targeting sequence regions lie at residues 1 to 6 (MGYARK) and 26 to 37 (RLTRGRKQNKEK). The chain crosses the membrane as a helical; Signal-anchor span at residues 7 to 29 (VGWVTAGLVIGAGACYCIYRLTR). Residues 30–379 (GRKQNKEKMA…TERMFPKSQE (350 aa)) are Cytoplasmic-facing. Residues 34–69 (NKEKMAEGGPGDVEDAGDCSGARYNDWSDDDDDSNE) are disordered. Phosphoserine occurs at positions 61, 67, and 72. The tract at residues 89-98 (RARARARARA) is nuclear localization signal. Ser110 is modified (phosphoserine). ARM repeat units lie at residues 111–151 (PNSD…NNAA), 153–192 (AFNRDIIRDLGGLPIVAKILNTRDPIVKEKALIVLNNLSV), and 233–272 (VTNEYQHILANSISDFFRLFSAGNEETKLQVLKLLLNLAE).

This sequence belongs to the eutherian X-chromosome-specific Armcx family. Interacts (via ARM domain) with MIRO1, MIRO2 and TRAK2. The interaction with Miro is calcium-dependent. Interacts with Sox10.

The protein resides in the mitochondrion outer membrane. It is found in the cytoplasm. It localises to the nucleus. In terms of biological role, regulates mitochondrial aggregation and transport in axons in living neurons. May link mitochondria to the Trak2-kinesin motor complex via its interaction with Miro and Trak2. Mitochondrial distribution and dynamics is regulated through Armcx3 protein degradation, which is promoted by PCK and negatively regulated by Wnt1. Enhances the Sox10-mediated transactivation of the neuronal acetylcholine receptor subunit alpha-3 and beta-4 subunit gene promoters. The protein is Armadillo repeat-containing X-linked protein 3 (Armcx3) of Rattus norvegicus (Rat).